Consider the following 249-residue polypeptide: Type III pantothenate kinase (249 aa).

Position 6–13 (6–13 (DCGNSFIK)) interacts with ATP. Residues Tyr93 and 100–103 (GMDR) each bind substrate. Catalysis depends on Asp102, which acts as the Proton acceptor. Residue Asp122 participates in K(+) binding. Thr125 contributes to the ATP binding site. Thr181 provides a ligand contact to substrate.

This sequence belongs to the type III pantothenate kinase family. As to quaternary structure, homodimer. It depends on NH4(+) as a cofactor. The cofactor is K(+).

The protein resides in the cytoplasm. It carries out the reaction (R)-pantothenate + ATP = (R)-4'-phosphopantothenate + ADP + H(+). The protein operates within cofactor biosynthesis; coenzyme A biosynthesis; CoA from (R)-pantothenate: step 1/5. In terms of biological role, catalyzes the phosphorylation of pantothenate (Pan), the first step in CoA biosynthesis. This chain is Type III pantothenate kinase, found in Pseudomonas putida (strain ATCC 47054 / DSM 6125 / CFBP 8728 / NCIMB 11950 / KT2440).